The following is a 462-amino-acid chain: Elongation factor 1-alpha, somatic form (462 aa).

G2 is subject to N,N,N-trimethylglycine. The tr-type G domain occupies 5-242; that stretch reads KTHINIVVIG…DCILPPSRPT (238 aa). A G1 region spans residues 14–21; that stretch reads GHVDSGKS. 14-21 serves as a coordination point for GTP; the sequence is GHVDSGKS. Residues 70-74 are G2; sequence GITID. Positions 91–94 are G3; that stretch reads DAPG. GTP is bound by residues 91–95 and 153–156; these read DAPGH and NKMD. The tract at residues 153–156 is G4; the sequence is NKMD. The interval 194-196 is G5; that stretch reads SGW. 2 positions are modified to 5-glutamyl glycerylphosphorylethanolamine: E301 and E374.

It belongs to the TRAFAC class translation factor GTPase superfamily. Classic translation factor GTPase family. EF-Tu/EF-1A subfamily.

Its subcellular location is the cytoplasm. In terms of biological role, this protein promotes the GTP-dependent binding of aminoacyl-tRNA to the A-site of ribosomes during protein biosynthesis. This Xenopus laevis (African clawed frog) protein is Elongation factor 1-alpha, somatic form (eef1as).